The sequence spans 128 residues: Flagellar assembly factor FliW 1 (128 aa).

This sequence belongs to the FliW family. In terms of assembly, interacts with translational regulator CsrA and flagellin(s).

The protein resides in the cytoplasm. Functionally, acts as an anti-CsrA protein, binds CsrA and prevents it from repressing translation of its target genes, one of which is flagellin. Binds to flagellin and participates in the assembly of the flagellum. The sequence is that of Flagellar assembly factor FliW 1 from Wolinella succinogenes (strain ATCC 29543 / DSM 1740 / CCUG 13145 / JCM 31913 / LMG 7466 / NCTC 11488 / FDC 602W) (Vibrio succinogenes).